Reading from the N-terminus, the 360-residue chain is GTPase Obg (360 aa).

The Obg domain maps to 1–156 (MFVDSVEIII…KCVRLELKLI (156 aa)). The region spanning 157–360 (ADIGLVGFPN…LKFVLLKALQ (204 aa)) is the OBG-type G domain. GTP contacts are provided by residues 163 to 170 (GFPNAGKS), 188 to 192 (FTTLV), 210 to 213 (DIPG), 279 to 282 (NKCD), and 341 to 343 (SAV). Mg(2+) contacts are provided by serine 170 and threonine 190.

Belongs to the TRAFAC class OBG-HflX-like GTPase superfamily. OBG GTPase family. Monomer. Mg(2+) is required as a cofactor.

It is found in the cytoplasm. Functionally, an essential GTPase which binds GTP, GDP and possibly (p)ppGpp with moderate affinity, with high nucleotide exchange rates and a fairly low GTP hydrolysis rate. Plays a role in control of the cell cycle, stress response, ribosome biogenesis and in those bacteria that undergo differentiation, in morphogenesis control. This Helicobacter pylori (strain P12) protein is GTPase Obg.